The sequence spans 56 residues: Calsequestrin-1 (56 aa).

Y9 is subject to Phosphotyrosine. S47 carries the post-translational modification Phosphoserine.

The protein belongs to the calsequestrin family. In terms of assembly, monomer; increases in response to a depletion of intracellular calcium. Homodimer. Homotetramer and homopolymer. Can form linear homooligomers. Ca(2+) ions promote oligomerization. Interacts (via C-terminal end and preferentially with the monomeric form) with STIM1; this interaction increases in response to a depletion of intracellular calcium, decreases both STIM1 aggregation and clustering, interaction of STIM1 with ORAI1 and store-operated Ca(2+) entry (SOCE) activity. Interacts with ASPH and TRDN. In terms of processing, N-glycosylated.

Its subcellular location is the endoplasmic reticulum. The protein resides in the sarcoplasmic reticulum. It localises to the sarcoplasmic reticulum lumen. The protein localises to the sarcoplasmic reticulum membrane. It is found in the mitochondrion matrix. In terms of biological role, calsequestrin is a high-capacity, moderate affinity, calcium-binding protein and thus acts as an internal calcium store in muscle. Calcium ions are bound by clusters of acidic residues at the protein surface, often at the interface between subunits. Can bind around 80 Ca(2+) ions. Regulates the release of lumenal Ca(2+) via the calcium release channel RYR1; this plays an important role in triggering muscle contraction. Negatively regulates store-operated Ca(2+) entry (SOCE) activity. This is Calsequestrin-1 (CASQ1) from Canis lupus familiaris (Dog).